The primary structure comprises 213 residues: 3-isopropylmalate dehydratase small subunit (213 aa).

The protein belongs to the LeuD family. LeuD type 1 subfamily. Heterodimer of LeuC and LeuD.

The enzyme catalyses (2R,3S)-3-isopropylmalate = (2S)-2-isopropylmalate. It functions in the pathway amino-acid biosynthesis; L-leucine biosynthesis; L-leucine from 3-methyl-2-oxobutanoate: step 2/4. Catalyzes the isomerization between 2-isopropylmalate and 3-isopropylmalate, via the formation of 2-isopropylmaleate. The protein is 3-isopropylmalate dehydratase small subunit of Aromatoleum aromaticum (strain DSM 19018 / LMG 30748 / EbN1) (Azoarcus sp. (strain EbN1)).